A 428-amino-acid polypeptide reads, in one-letter code: NADP-specific glutamate dehydrogenase (428 aa).

Substrate-binding residues include K68 and K92. K104 (proton donor) is an active-site residue. NADP(+) contacts are provided by T188 and N219. S356 lines the substrate pocket.

It belongs to the Glu/Leu/Phe/Val dehydrogenases family. As to quaternary structure, homohexamer.

It carries out the reaction L-glutamate + NADP(+) + H2O = 2-oxoglutarate + NH4(+) + NADPH + H(+). Catalyzes the reversible oxidative deamination of glutamate to alpha-ketoglutarate and ammonia. This chain is NADP-specific glutamate dehydrogenase (gdhA), found in Synechocystis sp. (strain ATCC 27184 / PCC 6803 / Kazusa).